A 303-amino-acid chain; its full sequence is 2-phospho-L-lactate transferase (303 aa).

7,8-didemethyl-8-hydroxy-5-deazariboflavin is bound by residues Asp48 and Lys87.

The protein belongs to the CofD family. In terms of assembly, homodimer. Requires Mg(2+) as cofactor.

It carries out the reaction (2S)-lactyl-2-diphospho-5'-guanosine + 7,8-didemethyl-8-hydroxy-5-deazariboflavin = oxidized coenzyme F420-0 + GMP + H(+). The protein operates within cofactor biosynthesis; coenzyme F420 biosynthesis. In terms of biological role, catalyzes the transfer of the 2-phospholactate moiety from (2S)-lactyl-2-diphospho-5'-guanosine to 7,8-didemethyl-8-hydroxy-5-deazariboflavin (FO) with the formation of oxidized coenzyme F420-0 and GMP. The protein is 2-phospho-L-lactate transferase of Methanosarcina mazei (strain ATCC BAA-159 / DSM 3647 / Goe1 / Go1 / JCM 11833 / OCM 88) (Methanosarcina frisia).